A 446-amino-acid polypeptide reads, in one-letter code: Phosphoglucosamine mutase (446 aa).

The Phosphoserine intermediate role is filled by Ser-101. Mg(2+) contacts are provided by Ser-101, Asp-240, Asp-242, and Asp-244. Position 101 is a phosphoserine (Ser-101).

Belongs to the phosphohexose mutase family. Mg(2+) is required as a cofactor. Post-translationally, activated by phosphorylation.

It carries out the reaction alpha-D-glucosamine 1-phosphate = D-glucosamine 6-phosphate. Its function is as follows. Catalyzes the conversion of glucosamine-6-phosphate to glucosamine-1-phosphate. The protein is Phosphoglucosamine mutase of Coxiella burnetii (strain CbuK_Q154) (Coxiella burnetii (strain Q154)).